A 119-amino-acid polypeptide reads, in one-letter code: uncharacterized protein (119 aa).

This is an uncharacterized protein from Vaccinia virus (strain Copenhagen) (VACV).